Consider the following 362-residue polypeptide: Protein-glutamate methylesterase/protein-glutamine glutaminase (362 aa).

The Response regulatory domain occupies 5-122 (KVLCVDDSAL…RDGMLDYSEK (118 aa)). 4-aspartylphosphate is present on Asp56. The 193-residue stretch at 163–355 (LLSTEKLIIV…RRVMARLSSM (193 aa)) folds into the CheB-type methylesterase domain. Residues Ser175, His201, and Asp297 contribute to the active site.

Belongs to the CheB family. Post-translationally, phosphorylated by CheA. Phosphorylation of the N-terminal regulatory domain activates the methylesterase activity.

It localises to the cytoplasm. The enzyme catalyses [protein]-L-glutamate 5-O-methyl ester + H2O = L-glutamyl-[protein] + methanol + H(+). It carries out the reaction L-glutaminyl-[protein] + H2O = L-glutamyl-[protein] + NH4(+). Involved in chemotaxis. Part of a chemotaxis signal transduction system that modulates chemotaxis in response to various stimuli. Catalyzes the demethylation of specific methylglutamate residues introduced into the chemoreceptors (methyl-accepting chemotaxis proteins or MCP) by CheR. Also mediates the irreversible deamidation of specific glutamine residues to glutamic acid. The sequence is that of Protein-glutamate methylesterase/protein-glutamine glutaminase from Paraburkholderia xenovorans (strain LB400).